A 143-amino-acid chain; its full sequence is Transcriptional regulator MraZ (143 aa).

SpoVT-AbrB domains lie at 5-47 (EYEH…PMPV) and 76-119 (ASDL…SAER).

It belongs to the MraZ family. In terms of assembly, forms oligomers.

Its subcellular location is the cytoplasm. It is found in the nucleoid. The chain is Transcriptional regulator MraZ from Herpetosiphon aurantiacus (strain ATCC 23779 / DSM 785 / 114-95).